The sequence spans 372 residues: Lectin/endochitinase 1 (372 aa).

An N-terminal signal peptide occupies residues 1 to 23 (MMMRFLSAVVIMSSAMAVGLVSA). Glutamine 24 is a binding site for substrate. Glutamine 24 bears the Pyrrolidone carboxylic acid mark. Chitin-binding type-1 domains lie at 24–64 (QRCG…KCWS) and 69–111 (DHRC…RCSS). Intrachain disulfides connect cysteine 26-cysteine 41, cysteine 35-cysteine 47, cysteine 40-cysteine 54, and cysteine 58-cysteine 62. 42-53 (SIWGWCGDSEPY) serves as a coordination point for substrate. Histidine 70 is a Zn(2+) binding site. Intrachain disulfides connect cysteine 72/cysteine 87, cysteine 81/cysteine 93, cysteine 86/cysteine 100, and cysteine 105/cysteine 109. Position 90 (histidine 90) interacts with Zn(2+). Residues 113 to 128 (VRGPRVALSGNSTANS) are spacer. Residue asparagine 123 is glycosylated (N-linked (GlcNAc...) asparagine). The tract at residues 129–372 (IGNVVVTEPL…FQRIQMRVAA (244 aa)) is chitinase.

As to quaternary structure, monomer and homodimer. Zinc favors dimerization. Active in the monomeric form but probably inactive in the dimeric form. The interaction with glycans on the mammalian TCR and MHC molecules of the T-cell and antigen-presenting cell, respectively, is inhibited by oligomers of GlcNAc. In terms of processing, proteolytically processed to yield a very small protein (8.5 kDa, 86 AA) containing only the two chitin-binding domains. In terms of tissue distribution, rhizomes and inflorescence with immature seeds.

It carries out the reaction Random endo-hydrolysis of N-acetyl-beta-D-glucosaminide (1-&gt;4)-beta-linkages in chitin and chitodextrins.. Functions both as a chitinase and as a N-acetyl-D-glucosamine binding lectin. Inhibits the growth of several phytopathogenic chitin-containing fungi. Also possesses insecticidal activity and superantigenic properties. In Urtica dioica (Great nettle), this protein is Lectin/endochitinase 1 (UDA1).